The following is an 89-amino-acid chain: Small ribosomal subunit protein uS15 (89 aa).

The protein belongs to the universal ribosomal protein uS15 family. As to quaternary structure, part of the 30S ribosomal subunit. Forms a bridge to the 50S subunit in the 70S ribosome, contacting the 23S rRNA.

One of the primary rRNA binding proteins, it binds directly to 16S rRNA where it helps nucleate assembly of the platform of the 30S subunit by binding and bridging several RNA helices of the 16S rRNA. Its function is as follows. Forms an intersubunit bridge (bridge B4) with the 23S rRNA of the 50S subunit in the ribosome. The polypeptide is Small ribosomal subunit protein uS15 (Brevibacillus brevis (strain 47 / JCM 6285 / NBRC 100599)).